A 1058-amino-acid chain; its full sequence is Carbamoyl phosphate synthase large chain (1058 aa).

A carboxyphosphate synthetic domain region spans residues Met-1–Glu-401. ATP is bound by residues Arg-129, Arg-169, Gly-175, Gly-176, Arg-208, Ile-210, Glu-215, Gly-241, Ile-242, His-243, Gln-284, and Glu-298. The 195-residue stretch at Lys-133–Val-327 folds into the ATP-grasp 1 domain. Gln-284, Glu-298, and Asn-300 together coordinate Mg(2+). Residues Gln-284, Glu-298, and Asn-300 each contribute to the Mn(2+) site. The segment at Ile-402–Ser-546 is oligomerization domain. The tract at residues Ile-547–Tyr-929 is carbamoyl phosphate synthetic domain. The ATP-grasp 2 domain maps to Glu-671–Leu-861. Positions 707, 746, 748, 752, 777, 778, 779, 780, 820, and 832 each coordinate ATP. Mg(2+) is bound by residues Gln-820, Glu-832, and Asn-834. 3 residues coordinate Mn(2+): Gln-820, Glu-832, and Asn-834. The MGS-like domain occupies Leu-930–Ile-1058. The segment at Leu-930–Ile-1058 is allosteric domain.

The protein belongs to the CarB family. Composed of two chains; the small (or glutamine) chain promotes the hydrolysis of glutamine to ammonia, which is used by the large (or ammonia) chain to synthesize carbamoyl phosphate. Tetramer of heterodimers (alpha,beta)4. It depends on Mg(2+) as a cofactor. Requires Mn(2+) as cofactor.

It catalyses the reaction hydrogencarbonate + L-glutamine + 2 ATP + H2O = carbamoyl phosphate + L-glutamate + 2 ADP + phosphate + 2 H(+). The enzyme catalyses hydrogencarbonate + NH4(+) + 2 ATP = carbamoyl phosphate + 2 ADP + phosphate + 2 H(+). Its pathway is amino-acid biosynthesis; L-arginine biosynthesis; carbamoyl phosphate from bicarbonate: step 1/1. It functions in the pathway pyrimidine metabolism; UMP biosynthesis via de novo pathway; (S)-dihydroorotate from bicarbonate: step 1/3. In terms of biological role, large subunit of the glutamine-dependent carbamoyl phosphate synthetase (CPSase). CPSase catalyzes the formation of carbamoyl phosphate from the ammonia moiety of glutamine, carbonate, and phosphate donated by ATP, constituting the first step of 2 biosynthetic pathways, one leading to arginine and/or urea and the other to pyrimidine nucleotides. The large subunit (synthetase) binds the substrates ammonia (free or transferred from glutamine from the small subunit), hydrogencarbonate and ATP and carries out an ATP-coupled ligase reaction, activating hydrogencarbonate by forming carboxy phosphate which reacts with ammonia to form carbamoyl phosphate. The polypeptide is Carbamoyl phosphate synthase large chain (Streptococcus pneumoniae serotype 2 (strain D39 / NCTC 7466)).